We begin with the raw amino-acid sequence, 1290 residues long: DNA-directed RNA polymerase subunit beta' (1290 aa).

4 residues coordinate Zn(2+): cysteine 60, cysteine 62, cysteine 75, and cysteine 78. Positions 535, 537, and 539 each coordinate Mg(2+). 4 residues coordinate Zn(2+): cysteine 875, cysteine 953, cysteine 960, and cysteine 963.

It belongs to the RNA polymerase beta' chain family. In terms of assembly, the RNAP catalytic core consists of 2 alpha, 1 beta, 1 beta' and 1 omega subunit. When a sigma factor is associated with the core the holoenzyme is formed, which can initiate transcription. It depends on Mg(2+) as a cofactor. The cofactor is Zn(2+).

It catalyses the reaction RNA(n) + a ribonucleoside 5'-triphosphate = RNA(n+1) + diphosphate. DNA-dependent RNA polymerase catalyzes the transcription of DNA into RNA using the four ribonucleoside triphosphates as substrates. In Nocardioides sp. (strain ATCC BAA-499 / JS614), this protein is DNA-directed RNA polymerase subunit beta'.